Consider the following 83-residue polypeptide: Retinal cone rhodopsin-sensitive cGMP 3',5'-cyclic phosphodiesterase subunit gamma (83 aa).

The disordered stretch occupies residues 1-51; the sequence is MSDSPCLSPPAPSQGPTTPRKGPPKFKQRQTRQFKSKPPKKGVKGFGDDIP. Over residues 22–43 the composition is skewed to basic residues; sequence GPPKFKQRQTRQFKSKPPKKGV.

Belongs to the rod/cone cGMP-PDE gamma subunit family. As to quaternary structure, tetramer composed of two catalytic chains (alpha and beta), and two inhibitory chains (gamma).

The catalysed reaction is 3',5'-cyclic GMP + H2O = GMP + H(+). In terms of biological role, participates in processes of transmission and amplification of the visual signal. cGMP-PDEs are the effector molecules in G-protein-mediated phototransduction in vertebrate rods and cones. This Rattus norvegicus (Rat) protein is Retinal cone rhodopsin-sensitive cGMP 3',5'-cyclic phosphodiesterase subunit gamma (Pde6h).